The sequence spans 265 residues: Hemin import ATP-binding protein HmuV (265 aa).

Residues 13–249 (LKASNLHLQL…TAVENVYGWP (237 aa)) form the ABC transporter domain. 45 to 52 (GPNGAGKS) lines the ATP pocket.

The protein belongs to the ABC transporter superfamily. Heme (hemin) importer (TC 3.A.1.14.5) family. In terms of assembly, the complex is composed of two ATP-binding proteins (HmuV), two transmembrane proteins (HmuU) and a solute-binding protein (HmuT).

The protein localises to the cell inner membrane. Part of the ABC transporter complex HmuTUV involved in hemin import. Responsible for energy coupling to the transport system. The polypeptide is Hemin import ATP-binding protein HmuV (Photobacterium damselae subsp. damselae (Listonella damsela)).